The chain runs to 227 residues: NAD(P)H-quinone oxidoreductase subunit K, chloroplastic (227 aa).

Positions 43, 44, 108, and 139 each coordinate [4Fe-4S] cluster.

The protein belongs to the complex I 20 kDa subunit family. NDH is composed of at least 16 different subunits, 5 of which are encoded in the nucleus. Requires [4Fe-4S] cluster as cofactor.

Its subcellular location is the plastid. It localises to the chloroplast thylakoid membrane. The enzyme catalyses a plastoquinone + NADH + (n+1) H(+)(in) = a plastoquinol + NAD(+) + n H(+)(out). It carries out the reaction a plastoquinone + NADPH + (n+1) H(+)(in) = a plastoquinol + NADP(+) + n H(+)(out). In terms of biological role, NDH shuttles electrons from NAD(P)H:plastoquinone, via FMN and iron-sulfur (Fe-S) centers, to quinones in the photosynthetic chain and possibly in a chloroplast respiratory chain. The immediate electron acceptor for the enzyme in this species is believed to be plastoquinone. Couples the redox reaction to proton translocation, and thus conserves the redox energy in a proton gradient. This is NAD(P)H-quinone oxidoreductase subunit K, chloroplastic from Spinacia oleracea (Spinach).